Reading from the N-terminus, the 832-residue chain is Spindle pole body component alp6 (832 aa).

Residues 1-186 form an interaction with mzt1 region; sequence MSEIHVKTAL…STETSSVQHT (186 aa). Thr-286 carries the phosphothreonine modification.

Belongs to the TUBGCP family. In terms of assembly, part of the gamma-tubulin complex. Interacts directly with mzt1. Interacts with mto1. Interacts with mto2.

Its subcellular location is the cytoplasm. It localises to the cytoskeleton. The protein localises to the microtubule organizing center. The protein resides in the spindle pole body. Component of the gamma tubule complex that is required for the regulation of both interphase microtubules and mitotic bipolar spindles. This Schizosaccharomyces pombe (strain 972 / ATCC 24843) (Fission yeast) protein is Spindle pole body component alp6 (alp6).